The sequence spans 314 residues: DNA oxidative demethylase ALKBH2 (314 aa).

Positions Met1–Asn28 are enriched in polar residues. The disordered stretch occupies residues Met1–Arg75. Basic and acidic residues predominate over residues Asn57–Arg75. Substrate-binding positions include Trp132 and Ala160–Tyr163. The region spanning Arg194–Leu314 is the Fe2OG dioxygenase domain. Asn201–Tyr203 provides a ligand contact to 2-oxoglutarate. Residues His213 and Asp215 each contribute to the Fe cation site. Asp216 provides a ligand contact to substrate. The tract at residues Lys242–Gln271 is disordered. A Fe cation-binding site is contributed by His293. Residues Arg305 and Arg305 to Arg311 each bind 2-oxoglutarate.

This sequence belongs to the alkB family. Fe(2+) is required as a cofactor. As to expression, expressed ubiquitously, including in seedlings, leaves and flowers.

The protein resides in the nucleus. The catalysed reaction is a methylated nucleobase within DNA + 2-oxoglutarate + O2 = a nucleobase within DNA + formaldehyde + succinate + CO2. Its function is as follows. Dioxygenase that repairs alkylated DNA containing 1-methyladenine and 1-ethenoadenine by oxidative demethylation. Accepts double-stranded and single-stranded substrates, with a preference for dsDNA over ssDNA. Confers resistance to methylating agents such as methylmethanesulphonate (MMS). This Arabidopsis thaliana (Mouse-ear cress) protein is DNA oxidative demethylase ALKBH2 (ALKBH2).